Reading from the N-terminus, the 379-residue chain is Homoserine O-succinyltransferase (379 aa).

The AB hydrolase-1 domain maps to 51–360 (NAVLICHALS…DAPQGHDAFL (310 aa)). S157 functions as the Nucleophile in the catalytic mechanism. R227 serves as a coordination point for substrate. Residues D323 and H356 contribute to the active site. Residue D357 participates in substrate binding.

The protein belongs to the AB hydrolase superfamily. MetX family. Homodimer.

The protein localises to the cytoplasm. It catalyses the reaction L-homoserine + succinyl-CoA = O-succinyl-L-homoserine + CoA. It participates in amino-acid biosynthesis; L-methionine biosynthesis via de novo pathway; O-succinyl-L-homoserine from L-homoserine: step 1/1. Functionally, transfers a succinyl group from succinyl-CoA to L-homoserine, forming succinyl-L-homoserine. This chain is Homoserine O-succinyltransferase, found in Pseudomonas syringae pv. tomato (strain ATCC BAA-871 / DC3000).